The primary structure comprises 502 residues: Probable malate:quinone oxidoreductase (502 aa).

This sequence belongs to the MQO family. FAD is required as a cofactor.

The catalysed reaction is (S)-malate + a quinone = a quinol + oxaloacetate. Its pathway is carbohydrate metabolism; tricarboxylic acid cycle; oxaloacetate from (S)-malate (quinone route): step 1/1. This is Probable malate:quinone oxidoreductase from Synechococcus sp. (strain CC9902).